The chain runs to 461 residues: Putative aldehyde dehydrogenase FUS7 (461 aa).

220–225 (GSTATG) contributes to the NAD(+) binding site. Catalysis depends on residues glutamate 242 and cysteine 276.

This sequence belongs to the aldehyde dehydrogenase family.

The catalysed reaction is an aldehyde + NAD(+) + H2O = a carboxylate + NADH + 2 H(+). Its function is as follows. Putative aldehyde dehydrogenase; part of the gene cluster that mediates the biosynthesis of the mycotoxin fusarin C. Within the cluster, FUS1, FUS2, FUS8 and FUS9 are sufficient for fusarin production. The other FUS cluster members are not essential for fusarin C biosynthesis. This Gibberella moniliformis (strain M3125 / FGSC 7600) (Maize ear and stalk rot fungus) protein is Putative aldehyde dehydrogenase FUS7.